A 240-amino-acid chain; its full sequence is MTREEAIKKIIFAMDVKEFSDVQYWAELLSQHVGMFKVGKQLYTACGPAAVRMIQKCGGEVFLDLKYHDIPNTVAMATLEAANLGVQLCDLHAMGGYEMMNKTMEALDKNFSGCTPRPKVLAITVLTSSNEETLRGIGIELPVPEMVVKLAKLAKSAGVDGVVASPQEVELIREACGKDFLVVTPGVRPSFASADDQKRIMTPAEAVKAGADYLVIGRPIAAAQSPVEAAQKIVDEIVAG.

Substrate contacts are provided by residues D15, K37, D64 to T73, T127, R188, Q197, G217, and R218. K66 (proton donor) is an active-site residue.

The protein belongs to the OMP decarboxylase family. Type 1 subfamily. In terms of assembly, homodimer.

It catalyses the reaction orotidine 5'-phosphate + H(+) = UMP + CO2. Its pathway is pyrimidine metabolism; UMP biosynthesis via de novo pathway; UMP from orotate: step 2/2. Its function is as follows. Catalyzes the decarboxylation of orotidine 5'-monophosphate (OMP) to uridine 5'-monophosphate (UMP). The chain is Orotidine 5'-phosphate decarboxylase from Geobacter sp. (strain M21).